Here is a 510-residue protein sequence, read N- to C-terminus: Light-independent protochlorophyllide reductase subunit B (510 aa).

A [4Fe-4S] cluster-binding site is contributed by aspartate 36. The Proton donor role is filled by aspartate 297. 432 to 433 (GM) contributes to the substrate binding site.

This sequence belongs to the ChlB/BchB/BchZ family. As to quaternary structure, protochlorophyllide reductase is composed of three subunits; ChlL, ChlN and ChlB. Forms a heterotetramer of two ChlB and two ChlN subunits. The cofactor is [4Fe-4S] cluster.

Its subcellular location is the plastid. It is found in the chloroplast. The catalysed reaction is chlorophyllide a + oxidized 2[4Fe-4S]-[ferredoxin] + 2 ADP + 2 phosphate = protochlorophyllide a + reduced 2[4Fe-4S]-[ferredoxin] + 2 ATP + 2 H2O. It participates in porphyrin-containing compound metabolism; chlorophyll biosynthesis (light-independent). Functionally, component of the dark-operative protochlorophyllide reductase (DPOR) that uses Mg-ATP and reduced ferredoxin to reduce ring D of protochlorophyllide (Pchlide) to form chlorophyllide a (Chlide). This reaction is light-independent. The NB-protein (ChlN-ChlB) is the catalytic component of the complex. This chain is Light-independent protochlorophyllide reductase subunit B, found in Pinus koraiensis (Korean pine).